Reading from the N-terminus, the 1255-residue chain is Structural polyprotein (1255 aa).

The segment at Met1 to Phe33 is necessary for nucleocapsid assembly and virus assembly. The interval Phe33–Arg68 is host transcription inhibition. Residues Leu41 to Leu48 carry the Supraphysiological nuclear export signal motif. The tract at residues Ser44–Val119 is disordered. Asn47 carries N-linked (GlcNAc...) asparagine; by host glycosylation. The Nuclear localization signal signature appears at Lys64–Arg68. Positions Gly80–Lys92 are enriched in basic residues. A binding to the viral RNA region spans residues Ala91–Thr127. 2 positions are modified to phosphothreonine: Thr93 and Thr108. The span at Asn104 to Met118 shows a compositional bias: basic residues. Residues Pro112–Lys126 form a ribosome-binding region. Residue Ser124 is modified to Phosphoserine. One can recognise a Peptidase S3 domain in the interval Lys126–Trp275. Position 127 is a phosphothreonine (Thr127). His152 functions as the Charge relay system in the catalytic mechanism. The tract at residues Lys168 to Tyr173 is interaction with spike glycoprotein E2. Residues Asp174 and Ser226 each act as charge relay system in the active site. The interval Glu260–Thr264 is interaction with spike glycoprotein E2. The segment at Ser276–Val287 is functions as an uncleaved signal peptide for the precursor of protein E3/E2. Topologically, residues Ser276 to Thr701 are extracellular. Cystine bridges form between Cys282–Cys291, Cys353–Cys457, Cys356–Cys361, Cys424–Cys438, Cys485–Cys600, Cys534–Cys560, and Cys536–Cys554. An N-linked (GlcNAc...) asparagine; by host glycan is attached at Asn286. Asn652 is a glycosylation site (N-linked (GlcNAc...) asparagine; by host). A helical membrane pass occupies residues Ile702 to Leu722. The Cytoplasmic segment spans residues Leu723–Ala757. Residues Lys725–Ser729 form an interaction with the capsid protein region. 3 S-palmitoyl cysteine; by host lipidation sites follow: Cys730, Cys750, and Cys751. The transient transmembrane before p62-6K protein processing stretch occupies residues Cys730–Cys750. Cys730 and Cys751 are oxidised to a cystine. Residues Glu758–Gln772 are Extracellular-facing. Residues Gln773–Leu793 traverse the membrane as a helical segment. Arg794 is a topological domain (cytoplasmic). The chain crosses the membrane as a helical span at residues Cys795–Glu815. Over His816 to Ser1225 the chain is Extracellular. 4 disulfide bridges follow: Cys862-Cys927, Cys875-Cys907, Cys876-Cys909, and Cys881-Cys891. Residues Val897–Thr914 are E1 fusion peptide loop. N-linked (GlcNAc...) asparagine; by host glycans are attached at residues Asn947 and Asn1083. Intrachain disulfides connect Cys1072–Cys1084, Cys1114–Cys1189, Cys1119–Cys1193, and Cys1141–Cys1183. Residues Leu1226–Met1246 traverse the membrane as a helical segment. Topologically, residues Tyr1247–Asn1255 are cytoplasmic.

Homodimer. Homomultimer. Interacts with host karyopherin KPNA4; this interaction allows the nuclear import of the viral capsid protein. Interacts with spike glycoprotein E2. Interacts with host IRAK1; the interaction leads to inhibition of IRAK1-dependent signaling. Part of a tetrameric complex composed of host CRM1, host importin alpha/beta dimer and the viral capsid; this complex blocks the receptor-mediated transport through the nuclear pore. Interacts with host phosphatase PPP1CA; this interaction dephosphorylates the capsid protein, which increases its ability to bind to the viral genome. In terms of assembly, the precursor of protein E3/E2 and E1 form a heterodimer shortly after synthesis. As to quaternary structure, interacts with spike glycoprotein E2. The precursor of protein E3/E2 and E1 form a heterodimer shortly after synthesis. Processing of the precursor of protein E3/E2 into E2 and E3 results in a heterodimer of the spike glycoproteins E2 and E1. Spike at virion surface are constituted of three E2-E1 heterodimers. After target cell attachment and endocytosis, E1 change conformation to form homotrimers. Interacts with 6K protein. Interacts with host LDLRAD3; this interaction mediates viral entry to the host cell. Interacts with spike glycoprotein E1. Processing of the precursor of protein E3/E2 into E2 and E3 results in a heterodimer of the spike glycoproteins E2 and E1. Spike at virion surface are constituted of a trimer of E2-E1 heterodimers. Interacts with 6K protein. Interacts with host LDLRAD3; this interaction mediates viral entry to the host cell. In terms of assembly, oligomer. Interacts with spike glycoprotein E1. Interacts with spike glycoprotein E2. Structural polyprotein: Specific enzymatic cleavages in vivo yield mature proteins. Capsid protein is auto-cleaved during polyprotein translation, unmasking a signal peptide at the N-terminus of the precursor of E3/E2. The remaining polyprotein is then targeted to the host endoplasmic reticulum, where host signal peptidase cleaves it into pE2, 6K and E1 proteins. pE2 is further processed to mature E3 and E2 by host furin in trans-Golgi vesicle. In terms of processing, phosphorylated on serine and threonine residues. Post-translationally, palmitoylated via thioester bonds. These palmitoylations may induce disruption of the C-terminus transmembrane. This would result in the reorientation of E2 C-terminus from lumenal to cytoplasmic side. N-glycosylated. In terms of processing, palmitoylated via thioester bonds.

It is found in the virion. It localises to the host cytoplasm. The protein resides in the host cell membrane. The protein localises to the host nucleus. Its subcellular location is the virion membrane. It is found in the host Golgi apparatus. It localises to the host trans-Golgi network. The protein resides in the host endoplasmic reticulum. It catalyses the reaction Autocatalytic release of the core protein from the N-terminus of the togavirus structural polyprotein by hydrolysis of a -Trp-|-Ser- bond.. In terms of biological role, forms an icosahedral capsid with a T=4 symmetry composed of 240 copies of the capsid protein surrounded by a lipid membrane through which penetrate 80 spikes composed of trimers of E1-E2 heterodimers. The capsid protein binds to the viral RNA genome at a site adjacent to a ribosome binding site for viral genome translation following genome release. Possesses a protease activity that results in its autocatalytic cleavage from the nascent structural protein. Following its self-cleavage, the capsid protein transiently associates with ribosomes, and within several minutes the protein binds to viral RNA and rapidly assembles into icosahedric core particles. The resulting nucleocapsid eventually associates with the cytoplasmic domain of the spike glycoprotein E2 at the cell membrane, leading to budding and formation of mature virions. In case of infection, new virions attach to target cells and after clathrin-mediated endocytosis their membrane fuses with the host endosomal membrane. This leads to the release of the nucleocapsid into the cytoplasm, followed by an uncoating event necessary for the genomic RNA to become accessible. The uncoating might be triggered by the interaction of capsid proteins with ribosomes. Binding of ribosomes would release the genomic RNA since the same region is genomic RNA-binding and ribosome-binding. Specifically inhibits interleukin-1 receptor-associated kinase 1/IRAK1-dependent signaling during viral entry, representing a means by which the alphaviruses may evade innate immune detection and activation prior to viral gene expression. Inhibits host transcription. Forms a tetrameric complex with XPO1/CRM1 and the nuclear import receptor importin. This complex blocks the central channel of host nuclear pores thereby inhibiting the receptor-mediated nuclear transport and thus the host mRNA and rRNA transcription. The inhibition of transcription is linked to a cytopathic effect on the host cell. Provides the signal sequence for the translocation of the precursor of protein E3/E2 to the host endoplasmic reticulum. Furin-cleaved E3 remains associated with spike glycoprotein E1 and mediates pH protection of the latter during the transport via the secretory pathway. After virion release from the host cell, the assembly protein E3 is gradually released in the extracellular space. Its function is as follows. Plays a role in viral attachment to target host cell, by binding to the cell receptor LDLRAD3. Synthesized as a p62 precursor which is processed by furin at the cell membrane just before virion budding, giving rise to E2-E1 heterodimer. The p62-E1 heterodimer is stable, whereas E2-E1 is unstable and dissociate at low pH. p62 is processed at the last step, presumably to avoid E1 fusion activation before its final export to cell surface. E2 C-terminus contains a transitory transmembrane that would be disrupted by palmitoylation, resulting in reorientation of the C-terminal tail from lumenal to cytoplasmic side. This step is critical since E2 C-terminus is involved in budding by interacting with capsid proteins. This release of E2 C-terminus in cytoplasm occurs lately in protein export, and precludes premature assembly of particles at the endoplasmic reticulum membrane. Functionally, acts as a viroporin that participates in virus glycoprotein processing and transport to the plasma membrane, cell permeabilization and budding of viral particles. Disrupts the calcium homeostasis of the cell, probably at the endoplasmic reticulum level. This leads to cytoplasmic calcium elevation. Because of its lipophilic properties, the 6K protein is postulated to influence the selection of lipids that interact with the transmembrane domains of the glycoproteins, which, in turn, affects the deformability of the bilayer required for the extreme curvature that occurs as budding proceeds. Present in low amount in virions, about 3% compared to viral glycoproteins. In terms of biological role, class II viral fusion protein. Fusion activity is inactive as long as E1 is bound to E2 in mature virion. After virus attachment to cell receptor LDLRAD3 and endocytosis, acidification of the endosome induce dissociation of E1/E2 heterodimer and concomitant trimerization of the E1 subunits. This E1 trimer is fusion active, and promotes release of viral nucleocapsid in cytoplasm after endosome and viral membrane fusion. Efficient fusion requires the presence of cholesterol and sphingolipid in the target membrane. This Venezuelan equine encephalitis virus (strain 3880) (VEEV) protein is Structural polyprotein.